We begin with the raw amino-acid sequence, 470 residues long: Choline/ethanolamine transporter flvcr2a (470 aa).

The Cytoplasmic portion of the chain corresponds to 1–23 (MCDKADNHIDVQPEGNLEVSSVS). Residues 24-48 (STRLYRRRWVILLLFSSYSLCNAFQ) traverse the membrane as a helical segment. 3 residues coordinate choline: Asn-45, Ala-46, and Trp-49. The Extracellular segment spans residues 49-66 (WIQYGIINNIFMKFYQVS). Residues 67 to 94 (SFAVDWLSMVYMLTYIPFIFPVTWLLER) traverse the membrane as a helical segment. Residues 95–96 (KG) lie on the Cytoplasmic side of the membrane. Residues 97–116 (LRVVALLAASINCAGTWIKV) traverse the membrane as a helical segment. The Extracellular segment spans residues 117–123 (ASVQPSL). The helical transmembrane segment at 124–152 (FWVTMLGQFACSCAQVFILGMPSQVASVW) threads the bilayer. The choline site is built by Gln-138 and Leu-142. Residues 153–157 (FGSDE) are Cytoplasmic-facing. Residues 158–183 (VSTACAIGVFGNQLGIAIGFLVPPVL) form a helical membrane-spanning segment. Residues 184 to 188 (VPNVE) are Extracellular-facing. The helical transmembrane segment at 189-218 (DMGELAEHISIMFYITAAVATLIFLLVVFV) threads the bilayer. The Cytoplasmic segment spans residues 219–254 (FQEKPETPPSLAQVALRNMPTGQHSYLASIARLMCN). The chain crosses the membrane as a helical span at residues 255–285 (KPFILLLISYGLNVGSFYAVSTLLNRMIIEH). Choline is bound at residue Tyr-272. Residues 286–289 (YPGE) are Extracellular-facing. The helical transmembrane segment at 290 to 318 (EVNAGRIGLTLVVAGVVGSLICGVWLDKT) threads the bilayer. Residues 319–320 (KT) lie on the Cytoplasmic side of the membrane. A helical membrane pass occupies residues 321 to 343 (YKQTTLSVYLLSFVGMLIYSFTL). Topologically, residues 344-346 (NLG) are extracellular. Residues 347-376 (HLWLVFLTSGVLGFFMTGYLPLGFEFAVEL) traverse the membrane as a helical segment. The Cytoplasmic segment spans residues 377–384 (TYPESEGT). The chain crosses the membrane as a helical span at residues 385–410 (SSGLLNCSAQVFGIAFTIIQGKIIDH). Gln-394 contributes to the choline binding site. At 411–412 (FG) the chain is on the extracellular side. A helical transmembrane segment spans residues 413–435 (TLAGNIFLCVFLLIGSIMTAFIK). At 436–470 (SDLRRQKANQETGGNADSSVHPQHGETLPVKEVKM) the chain is on the cytoplasmic side. The segment covering 445–456 (QETGGNADSSVH) has biased composition (polar residues). The interval 445–470 (QETGGNADSSVHPQHGETLPVKEVKM) is disordered.

Belongs to the major facilitator superfamily. Feline leukemia virus subgroup C receptor (TC 2.A.1.28.1) family.

The protein localises to the cell membrane. The protein resides in the mitochondrion membrane. Its subcellular location is the endoplasmic reticulum membrane. It catalyses the reaction choline(out) = choline(in). The catalysed reaction is ethanolamine(in) = ethanolamine(out). It carries out the reaction heme b(in) = heme b(out). In terms of biological role, choline uniporter that specifically mediates choline uptake at the blood-brain-barrier. Responsible for the majority of choline uptake across the blood-brain-barrier from the circulation into the brain. Choline, a nutrient critical for brain development, is a precursor of phosphatidylcholine, as well as betaine. Also mediates transport of ethanolamine. Choline and ethanolamine transport is not coupled with proton transport and is exclusively driven by the choline gradient across the plasma membrane. Also acts as a heme b transporter. This Danio rerio (Zebrafish) protein is Choline/ethanolamine transporter flvcr2a.